The primary structure comprises 279 residues: Prostatic spermine-binding protein (279 aa).

Residues 1–17 form the signal peptide; the sequence is MLLLVTLALLAGPTCRA. Position 18 is a pyrrolidone carboxylic acid (Q18). In terms of domain architecture, Jacalin-type lectin spans 18 to 151; it reads QNILGNNVGT…LNGMGFKWKN (134 aa). N62 carries an N-linked (GlcNAc...) asparagine glycan. Acidic residues-rich tracts occupy residues 160-177 and 185-279; these read DDDK…NEED and NDHD…EEEE. The disordered stretch occupies residues 160–279; sequence DDDKEDDDDE…DDDNGDEEEE (120 aa).

To mouse SBP. In terms of tissue distribution, prostate.

Spermine-binding protein is an androgen regulated ventral prostate glycoprotein that binds various polyamines. This Rattus norvegicus (Rat) protein is Prostatic spermine-binding protein (Sbp).